A 49-amino-acid chain; its full sequence is MGKRKANHTISGMNAASAQGQGTGYNEEFANEPFTPAERQNNKKRKKNQ.

The tract at residues 1–49 is disordered; it reads MGKRKANHTISGMNAASAQGQGTGYNEEFANEPFTPAERQNNKKRKKNQ. Polar residues predominate over residues 8 to 20; it reads HTISGMNAASAQG.

The protein belongs to the SspO family.

The protein localises to the spore core. The chain is Small, acid-soluble spore protein O from Bacillus cereus (strain ATCC 14579 / DSM 31 / CCUG 7414 / JCM 2152 / NBRC 15305 / NCIMB 9373 / NCTC 2599 / NRRL B-3711).